Consider the following 178-residue polypeptide: Peptide deformylase (178 aa).

C102 and H144 together coordinate Fe cation. E145 is a catalytic residue. A Fe cation-binding site is contributed by H148.

Belongs to the polypeptide deformylase family. The cofactor is Fe(2+).

The catalysed reaction is N-terminal N-formyl-L-methionyl-[peptide] + H2O = N-terminal L-methionyl-[peptide] + formate. Its function is as follows. Removes the formyl group from the N-terminal Met of newly synthesized proteins. Requires at least a dipeptide for an efficient rate of reaction. N-terminal L-methionine is a prerequisite for activity but the enzyme has broad specificity at other positions. This chain is Peptide deformylase, found in Leptospira interrogans serogroup Icterohaemorrhagiae serovar copenhageni (strain Fiocruz L1-130).